The sequence spans 293 residues: ATP synthase subunit a (293 aa).

6 consecutive transmembrane segments (helical) span residues 40–60 (DSLFWSILMGLLVVFCLWLAA), 97–117 (LFVAPLALTVFLWIILMNALD), 151–171 (DLNVPMGMSLGVLLLMFYYGI), 188–208 (FHAHGLASLVLAPFNLLLNLI), 225–245 (MFAGELIFMLIALLGGAWTGF), and 264–284 (AIFHILIVLLQAFIFMMLTLV).

This sequence belongs to the ATPase A chain family. In terms of assembly, F-type ATPases have 2 components, CF(1) - the catalytic core - and CF(0) - the membrane proton channel. CF(1) has five subunits: alpha(3), beta(3), gamma(1), delta(1), epsilon(1). CF(0) has three main subunits: a(1), b(2) and c(9-12). The alpha and beta chains form an alternating ring which encloses part of the gamma chain. CF(1) is attached to CF(0) by a central stalk formed by the gamma and epsilon chains, while a peripheral stalk is formed by the delta and b chains.

It localises to the cell inner membrane. Functionally, key component of the proton channel; it plays a direct role in the translocation of protons across the membrane. The chain is ATP synthase subunit a from Bordetella bronchiseptica (strain ATCC BAA-588 / NCTC 13252 / RB50) (Alcaligenes bronchisepticus).